Reading from the N-terminus, the 93-residue chain is Small ribosomal subunit protein bS20 (93 aa).

Positions lysine 72–serine 93 are disordered. Positions threonine 74–arginine 84 are enriched in basic residues.

This sequence belongs to the bacterial ribosomal protein bS20 family.

In terms of biological role, binds directly to 16S ribosomal RNA. In Carboxydothermus hydrogenoformans (strain ATCC BAA-161 / DSM 6008 / Z-2901), this protein is Small ribosomal subunit protein bS20.